The following is a 222-amino-acid chain: Peroxisomal membrane protein 11-4 (222 aa).

Topologically, residues 1 to 81 (MSAGDTLDKL…LNGLRRAPGE (81 aa)) are cytoplasmic. Residues 82–102 (FGALAVLANAGEMVYFFFDHF) traverse the membrane as a helical segment. Residues 103–196 (TWLSRVGVLD…IGIADIEPNP (94 aa)) lie on the Lumenal side of the membrane. Residues 197–217 (FCNHAVTLGISGLVSAWAGWY) form a helical membrane-spanning segment. The Cytoplasmic portion of the chain corresponds to 218 to 222 (RNWPS).

This sequence belongs to the peroxin-11 family. As to expression, expressed in seedlings, shoots, leaf sheaths and flag leaf.

The protein localises to the peroxisome membrane. In terms of biological role, involved in peroxisomal proliferation. This Oryza sativa subsp. indica (Rice) protein is Peroxisomal membrane protein 11-4 (PEX11-4).